The chain runs to 597 residues: Elongation factor 4 (597 aa).

The region spanning 2–184 (KNIRNFSIIA…EIVAKIPAPT (183 aa)) is the tr-type G domain. Residues 14 to 19 (DHGKST) and 131 to 134 (NKID) contribute to the GTP site.

The protein belongs to the TRAFAC class translation factor GTPase superfamily. Classic translation factor GTPase family. LepA subfamily.

It localises to the cell inner membrane. The catalysed reaction is GTP + H2O = GDP + phosphate + H(+). Required for accurate and efficient protein synthesis under certain stress conditions. May act as a fidelity factor of the translation reaction, by catalyzing a one-codon backward translocation of tRNAs on improperly translocated ribosomes. Back-translocation proceeds from a post-translocation (POST) complex to a pre-translocation (PRE) complex, thus giving elongation factor G a second chance to translocate the tRNAs correctly. Binds to ribosomes in a GTP-dependent manner. This is Elongation factor 4 from Neisseria meningitidis serogroup C (strain 053442).